The following is a 425-amino-acid chain: Bifunctional phosphoribosylaminoimidazole carboxylase/phosphoribosylaminoimidazole succinocarboxamide synthetase (425 aa).

N-acetylalanine is present on Ala-2. Positions 2–260 are SAICAR synthetase domain; the sequence is ATAEVLNIGR…WVADRVELLL (259 aa). At Tyr-22 the chain carries Phosphotyrosine. Residue Ser-27 is modified to Phosphoserine. N6-acetyllysine is present on Lys-36. Ser-107 bears the Phosphoserine mark. At Thr-238 the chain carries Phosphothreonine. Lys-247 carries the post-translational modification N6-acetyllysine. Residues 261–266 form a linker region; the sequence is KSNSQC. The tract at residues 267–425 is AIR carboxylase domain; that stretch reads RVVVLMGSTS…ADKKIRECNL (159 aa). Ser-274 carries the phosphoserine modification. A CO2-binding site is contributed by Ser-332.

It in the N-terminal section; belongs to the SAICAR synthetase family. The protein in the C-terminal section; belongs to the AIR carboxylase family. Class II subfamily. In terms of assembly, homooctamer.

It catalyses the reaction 5-amino-1-(5-phospho-D-ribosyl)imidazole-4-carboxylate + L-aspartate + ATP = (2S)-2-[5-amino-1-(5-phospho-beta-D-ribosyl)imidazole-4-carboxamido]succinate + ADP + phosphate + 2 H(+). It carries out the reaction 5-amino-1-(5-phospho-D-ribosyl)imidazole-4-carboxylate + H(+) = 5-amino-1-(5-phospho-beta-D-ribosyl)imidazole + CO2. The protein operates within purine metabolism; IMP biosynthesis via de novo pathway; 5-amino-1-(5-phospho-D-ribosyl)imidazole-4-carboxamide from 5-amino-1-(5-phospho-D-ribosyl)imidazole-4-carboxylate: step 1/2. It participates in purine metabolism; IMP biosynthesis via de novo pathway; 5-amino-1-(5-phospho-D-ribosyl)imidazole-4-carboxylate from 5-amino-1-(5-phospho-D-ribosyl)imidazole (carboxylase route): step 1/1. Functionally, bifunctional phosphoribosylaminoimidazole carboxylase and phosphoribosylaminoimidazole succinocarboxamide synthetase catalyzing two reactions of the de novo purine biosynthetic pathway. This Rattus norvegicus (Rat) protein is Bifunctional phosphoribosylaminoimidazole carboxylase/phosphoribosylaminoimidazole succinocarboxamide synthetase.